We begin with the raw amino-acid sequence, 29 residues long: uncharacterized protein (29 aa).

The protein localises to the plastid. Its subcellular location is the chloroplast. This is an uncharacterized protein from Trieres chinensis (Marine centric diatom).